The following is a 619-amino-acid chain: HAUS augmin-like complex subunit 5 (619 aa).

Position 1 is an N-acetylmethionine (M1). Coiled-coil stretches lie at residues 73–108 (KIHR…SEAQ), 310–395 (ALLS…LVED), and 550–590 (ELLQ…LQGI).

This sequence belongs to the HAUS5 family. Component of the HAUS augmin-like complex. The complex interacts with the gamma-tubulin ring complex and this interaction is required for spindle assembly. Interacts with EML3 (phosphorylated at 'Thr-882').

It localises to the cytoplasm. The protein localises to the cytoskeleton. The protein resides in the microtubule organizing center. Its subcellular location is the centrosome. It is found in the spindle. Functionally, contributes to mitotic spindle assembly, maintenance of centrosome integrity and completion of cytokinesis as part of the HAUS augmin-like complex. This Mus musculus (Mouse) protein is HAUS augmin-like complex subunit 5 (Haus5).